Here is a 423-residue protein sequence, read N- to C-terminus: Large ribosomal subunit protein mL37 (423 aa).

The N-terminal 29 residues, 1 to 29 (MALASGPAMRALAGSARLGLGGYGAPKRG), are a transit peptide targeting the mitochondrion.

Belongs to the mitochondrion-specific ribosomal protein mL37 family. As to quaternary structure, component of the mitochondrial ribosome large subunit (39S) which comprises a 16S rRNA and about 50 distinct proteins.

The protein resides in the mitochondrion. In Rattus norvegicus (Rat), this protein is Large ribosomal subunit protein mL37 (Mrpl37).